Consider the following 185-residue polypeptide: MMTHLRPALASLLALSLLTGVAYPLALTGIAAVIAPDRAAGSLILREGQVVGSALIGQGFDGPGYLHPRPSASDWNAAGTSASNLGPTSAALLAEVQERQAAYEAQNGAPAPVDAVTASGSGLDPHVSPANARAQAARIARARGLDEAAVRRLIEAHVEPPLLGLWGQARVNVLAVNLALDAAGA.

The helical transmembrane segment at 14 to 34 threads the bilayer; sequence ALSLLTGVAYPLALTGIAAVI. The tract at residues 105–128 is disordered; that stretch reads AQNGAPAPVDAVTASGSGLDPHVS.

Belongs to the KdpC family. The system is composed of three essential subunits: KdpA, KdpB and KdpC.

The protein localises to the cell inner membrane. Functionally, part of the high-affinity ATP-driven potassium transport (or Kdp) system, which catalyzes the hydrolysis of ATP coupled with the electrogenic transport of potassium into the cytoplasm. This subunit acts as a catalytic chaperone that increases the ATP-binding affinity of the ATP-hydrolyzing subunit KdpB by the formation of a transient KdpB/KdpC/ATP ternary complex. The polypeptide is Potassium-transporting ATPase KdpC subunit (Cereibacter sphaeroides (strain ATCC 17029 / ATH 2.4.9) (Rhodobacter sphaeroides)).